We begin with the raw amino-acid sequence, 793 residues long: Protein zer-1 homolog (793 aa).

LRR repeat units follow at residues 84–108, 187–210, and 269–294; these read RTSL…LMRH, LHDL…ALGS, and LRHL…ESTT.

The protein belongs to the zyg-11 family.

Serves as substrate adapter subunit in an E3 ubiquitin ligase complex CG12084-cul-2-elongin BC. Targets substrates bearing N-terminal glycine degrons for proteasomal degradation. This is Protein zer-1 homolog from Drosophila melanogaster (Fruit fly).